The following is a 234-amino-acid chain: Demethylmenaquinone methyltransferase (234 aa).

S-adenosyl-L-methionine is bound by residues threonine 58, aspartate 79, and 106 to 107 (NA).

Belongs to the class I-like SAM-binding methyltransferase superfamily. MenG/UbiE family.

The enzyme catalyses a 2-demethylmenaquinol + S-adenosyl-L-methionine = a menaquinol + S-adenosyl-L-homocysteine + H(+). Its pathway is quinol/quinone metabolism; menaquinone biosynthesis; menaquinol from 1,4-dihydroxy-2-naphthoate: step 2/2. Methyltransferase required for the conversion of demethylmenaquinol (DMKH2) to menaquinol (MKH2). This Geobacillus stearothermophilus (Bacillus stearothermophilus) protein is Demethylmenaquinone methyltransferase.